The following is a 147-amino-acid chain: MADFDAVLKFWGPVEADYTSHGGLVLTRLFKEHPETQKLFPKFTGIAQADMAGNAAISAHGATVLKKLGELLKAKGNHAAILKPMANSHATKHKIPINNFKLISEIIVKVMQEKAGMDAGGQQALRNVMAAVIADLEANYKELGFSG.

The Globin domain maps to A2–K141. H60 contributes to the nitrite binding site. An O2-binding site is contributed by H60. Residue H89 participates in heme b binding.

This sequence belongs to the globin family. As to quaternary structure, monomeric.

Its subcellular location is the cytoplasm. It is found in the sarcoplasm. It catalyses the reaction Fe(III)-heme b-[protein] + nitric oxide + H2O = Fe(II)-heme b-[protein] + nitrite + 2 H(+). The enzyme catalyses H2O2 + AH2 = A + 2 H2O. Monomeric heme protein which primary function is to store oxygen and facilitate its diffusion within muscle tissues. Reversibly binds oxygen through a pentacoordinated heme iron and enables its timely and efficient release as needed during periods of heightened demand. Depending on the oxidative conditions of tissues and cells, and in addition to its ability to bind oxygen, it also has a nitrite reductase activity whereby it regulates the production of bioactive nitric oxide. Under stress conditions, like hypoxia and anoxia, it also protects cells against reactive oxygen species thanks to its pseudoperoxidase activity. The sequence is that of Myoglobin (mb) from Sarda chiliensis (Pacific bonito).